The chain runs to 500 residues: L-arabinose isomerase (500 aa).

Positions 306, 333, 349, and 448 each coordinate Mn(2+).

It belongs to the arabinose isomerase family. Requires Mn(2+) as cofactor.

The enzyme catalyses beta-L-arabinopyranose = L-ribulose. Its pathway is carbohydrate degradation; L-arabinose degradation via L-ribulose; D-xylulose 5-phosphate from L-arabinose (bacterial route): step 1/3. In terms of biological role, catalyzes the conversion of L-arabinose to L-ribulose. The chain is L-arabinose isomerase from Shewanella sp. (strain MR-4).